A 493-amino-acid polypeptide reads, in one-letter code: Monodehydroascorbate reductase, chloroplastic/mitochondrial (493 aa).

The N-terminal 51 residues, 1 to 51, are a transit peptide targeting the chloroplast and mitochondrion; the sequence is MSAVRRVMALASTTLPTKSGLSLWCPSSPSLARRFPARFSPIGSRIASRSL. FAD contacts are provided by residues 68-71, Glu-95, Arg-102, Lys-107, and 201-202; these read GGNA and RE. Residues 224 to 230, Glu-248, Arg-254, and Gly-313 each bind NAD(+); that span reads GGYIGME. Residue 226–230 participates in NADP(+) binding; that stretch reads YIGME. Residues Arg-254 and Gly-313 each coordinate NADP(+). Asp-351 lines the FAD pocket. 367–368 contributes to the NAD(+) binding site; sequence EH. NADP(+) is bound at residue 367–368; the sequence is EH. Val-369 contributes to the FAD binding site. An L-ascorbate-binding site is contributed by Arg-373. Tyr-398 serves as a coordination point for FAD. Tyr-398 contacts NAD(+). Tyr-398 serves as a coordination point for NADP(+). Arg-400 contacts L-ascorbate.

It belongs to the FAD-dependent oxidoreductase family. Interacts in vitro with TRXy. FAD serves as cofactor.

The protein localises to the plastid. It localises to the chloroplast. Its subcellular location is the mitochondrion. The enzyme catalyses 2 monodehydro-L-ascorbate radical + NADH + H(+) = 2 L-ascorbate + NAD(+). The catalysed reaction is 2,4,6-trinitrotoluene + NADH = 2,4,6-trinitrotoluene radical + e(-) + NAD(+). Redox regulation of the activity by thioredoxin TRXy1. In terms of biological role, catalyzes the conversion of monodehydroascorbate (MDA) to ascorbate, oxidizing NADH in the process. Mediates phytotoxicity of 2,4,6-trinitrotoluene (TNT), an explosive and environmental pollutant, by reducing TNT and forming a nitro radical that spontaneously reacts with atmospheric oxygen, generating reactive superoxide. Can also use 1-chloro-2,4-dinitrobenzene (CDNB) as substrate, but not 1-chloro-4-nitrobenzene (CNB). The protein is Monodehydroascorbate reductase, chloroplastic/mitochondrial of Arabidopsis thaliana (Mouse-ear cress).